The following is a 133-amino-acid chain: UPF0102 protein CYA_0680 (133 aa).

This sequence belongs to the UPF0102 family.

The polypeptide is UPF0102 protein CYA_0680 (Synechococcus sp. (strain JA-3-3Ab) (Cyanobacteria bacterium Yellowstone A-Prime)).